A 426-amino-acid polypeptide reads, in one-letter code: Dihydroorotase (426 aa).

2 residues coordinate Zn(2+): H62 and H64. Substrate-binding positions include 64–66 (HLR) and N96. The Zn(2+) site is built by D154, H181, H234, and D307. The active site involves D307. A substrate-binding site is contributed by H311.

Belongs to the metallo-dependent hydrolases superfamily. DHOase family. Class I DHOase subfamily. Zn(2+) is required as a cofactor.

It catalyses the reaction (S)-dihydroorotate + H2O = N-carbamoyl-L-aspartate + H(+). The protein operates within pyrimidine metabolism; UMP biosynthesis via de novo pathway; (S)-dihydroorotate from bicarbonate: step 3/3. Catalyzes the reversible cyclization of carbamoyl aspartate to dihydroorotate. The sequence is that of Dihydroorotase from Syntrophus aciditrophicus (strain SB).